Here is a 504-residue protein sequence, read N- to C-terminus: Phosphoenolpyruvate carboxylase (504 aa).

Residues 1 to 16 show a composition bias toward polar residues; that stretch reads MTSRKIPSIMGTQHPD. Positions 1–21 are disordered; that stretch reads MTSRKIPSIMGTQHPDNANAP.

It belongs to the PEPCase type 2 family. As to quaternary structure, homotetramer. Mg(2+) serves as cofactor.

It catalyses the reaction oxaloacetate + phosphate = phosphoenolpyruvate + hydrogencarbonate. Its function is as follows. Catalyzes the irreversible beta-carboxylation of phosphoenolpyruvate (PEP) to form oxaloacetate (OAA), a four-carbon dicarboxylic acid source for the tricarboxylic acid cycle. The sequence is that of Phosphoenolpyruvate carboxylase from Leuconostoc mesenteroides subsp. mesenteroides (strain ATCC 8293 / DSM 20343 / BCRC 11652 / CCM 1803 / JCM 6124 / NCDO 523 / NBRC 100496 / NCIMB 8023 / NCTC 12954 / NRRL B-1118 / 37Y).